The following is a 224-amino-acid chain: Flagellar L-ring protein (224 aa).

The N-terminal stretch at 1 to 15 is a signal peptide; it reads MARYFILAAALLLTA. The N-palmitoyl cysteine moiety is linked to residue Cys-16. Cys-16 is lipidated: S-diacylglycerol cysteine.

This sequence belongs to the FlgH family. In terms of assembly, the basal body constitutes a major portion of the flagellar organelle and consists of four rings (L,P,S, and M) mounted on a central rod.

It is found in the cell outer membrane. The protein localises to the bacterial flagellum basal body. Its function is as follows. Assembles around the rod to form the L-ring and probably protects the motor/basal body from shearing forces during rotation. This Shewanella sp. (strain MR-4) protein is Flagellar L-ring protein.